Consider the following 175-residue polypeptide: ATP synthase subunit b, chloroplastic (175 aa).

Residues 21–40 (LLESNVINIIILISLLIYLG) traverse the membrane as a helical segment.

It belongs to the ATPase B chain family. F-type ATPases have 2 components, F(1) - the catalytic core - and F(0) - the membrane proton channel. F(1) has five subunits: alpha(3), beta(3), gamma(1), delta(1), epsilon(1). F(0) has four main subunits: a(1), b(1), b'(1) and c(10-14). The alpha and beta chains form an alternating ring which encloses part of the gamma chain. F(1) is attached to F(0) by a central stalk formed by the gamma and epsilon chains, while a peripheral stalk is formed by the delta, b and b' chains.

It is found in the plastid. The protein localises to the chloroplast thylakoid membrane. In terms of biological role, f(1)F(0) ATP synthase produces ATP from ADP in the presence of a proton or sodium gradient. F-type ATPases consist of two structural domains, F(1) containing the extramembraneous catalytic core and F(0) containing the membrane proton channel, linked together by a central stalk and a peripheral stalk. During catalysis, ATP synthesis in the catalytic domain of F(1) is coupled via a rotary mechanism of the central stalk subunits to proton translocation. Its function is as follows. Component of the F(0) channel, it forms part of the peripheral stalk, linking F(1) to F(0). This Cyanidium caldarium (Red alga) protein is ATP synthase subunit b, chloroplastic.